The following is a 1069-amino-acid chain: Rab GTPase-activating protein 1 (1069 aa).

Residues 1–79 are disordered; sequence MDDKASVGKI…DPPMDDQPGE (79 aa). A compositionally biased stretch (low complexity) spans 7 to 22; the sequence is VGKISVSSDSVSTLNS. Ser-42 is modified (phosphoserine). One can recognise a PID domain in the interval 142-298; that stretch reads EDSVVFSKLT…IFTFSVSLEI (157 aa). Position 360 is a phosphoserine (Ser-360). The interval 482–527 is disordered; sequence ERERRKTTASPSVRLPQSGSQSSVIPSPPEDDEEEDNDEPLLSGSG. Residues 489-506 show a composition bias toward polar residues; it reads TASPSVRLPQSGSQSSVI. The segment covering 510–520 has biased composition (acidic residues); that stretch reads PEDDEEEDNDE. The region spanning 566 to 752 is the Rab-GAP TBC domain; sequence GVPEALRGEV…HIIDLLLCEG (187 aa). Residues 798 to 1047 adopt a coiled-coil conformation; the sequence is KKLMELACNM…ALNEVQAAKK (250 aa). Position 996 is a phosphothreonine (Thr-996).

Interacts with RAB6A and tubulin gamma.

It localises to the cytoplasm. The protein localises to the cytosol. The protein resides in the cytoskeleton. It is found in the microtubule organizing center. Its subcellular location is the centrosome. Functionally, may act as a GTPase-activating protein of RAB6A. May play a role in microtubule nucleation by centrosome. May participate in a RAB6A-mediated pathway involved in the metaphase-anaphase transition. This is Rab GTPase-activating protein 1 (RABGAP1) from Homo sapiens (Human).